The sequence spans 627 residues: tRNA uridine 5-carboxymethylaminomethyl modification enzyme MnmG (627 aa).

FAD is bound by residues G13 to G18, V125, and S180. NAD(+) is bound at residue G274 to F288. Q371 is an FAD binding site.

The protein belongs to the MnmG family. Homodimer. Heterotetramer of two MnmE and two MnmG subunits. Requires FAD as cofactor.

The protein resides in the cytoplasm. Functionally, NAD-binding protein involved in the addition of a carboxymethylaminomethyl (cmnm) group at the wobble position (U34) of certain tRNAs, forming tRNA-cmnm(5)s(2)U34. This chain is tRNA uridine 5-carboxymethylaminomethyl modification enzyme MnmG, found in Francisella tularensis subsp. novicida (strain U112).